Reading from the N-terminus, the 439-residue chain is Xylose isomerase (439 aa).

Residues His-101 and Asp-104 contribute to the active site. 7 residues coordinate Mg(2+): Glu-232, Glu-268, His-271, Asp-296, Asp-307, Asp-309, and Asp-339.

Belongs to the xylose isomerase family. In terms of assembly, homotetramer. Requires Mg(2+) as cofactor.

Its subcellular location is the cytoplasm. It carries out the reaction alpha-D-xylose = alpha-D-xylulofuranose. This is Xylose isomerase from Haemophilus influenzae (strain PittGG).